Consider the following 245-residue polypeptide: Biosynthetic peptidoglycan transglycosylase (245 aa).

A helical membrane pass occupies residues 20–42 (VYAGSVFAGAWLATQLFYLVQIA).

It belongs to the glycosyltransferase 51 family.

It localises to the cell inner membrane. The enzyme catalyses [GlcNAc-(1-&gt;4)-Mur2Ac(oyl-L-Ala-gamma-D-Glu-L-Lys-D-Ala-D-Ala)](n)-di-trans,octa-cis-undecaprenyl diphosphate + beta-D-GlcNAc-(1-&gt;4)-Mur2Ac(oyl-L-Ala-gamma-D-Glu-L-Lys-D-Ala-D-Ala)-di-trans,octa-cis-undecaprenyl diphosphate = [GlcNAc-(1-&gt;4)-Mur2Ac(oyl-L-Ala-gamma-D-Glu-L-Lys-D-Ala-D-Ala)](n+1)-di-trans,octa-cis-undecaprenyl diphosphate + di-trans,octa-cis-undecaprenyl diphosphate + H(+). Its pathway is cell wall biogenesis; peptidoglycan biosynthesis. In terms of biological role, peptidoglycan polymerase that catalyzes glycan chain elongation from lipid-linked precursors. The polypeptide is Biosynthetic peptidoglycan transglycosylase (Burkholderia ambifaria (strain ATCC BAA-244 / DSM 16087 / CCUG 44356 / LMG 19182 / AMMD) (Burkholderia cepacia (strain AMMD))).